The primary structure comprises 176 residues: Peptide methionine sulfoxide reductase MsrA (176 aa).

Cys-10 is a catalytic residue.

Belongs to the MsrA Met sulfoxide reductase family.

It catalyses the reaction L-methionyl-[protein] + [thioredoxin]-disulfide + H2O = L-methionyl-(S)-S-oxide-[protein] + [thioredoxin]-dithiol. The catalysed reaction is [thioredoxin]-disulfide + L-methionine + H2O = L-methionine (S)-S-oxide + [thioredoxin]-dithiol. Has an important function as a repair enzyme for proteins that have been inactivated by oxidation. Catalyzes the reversible oxidation-reduction of methionine sulfoxide in proteins to methionine. This Leptospira borgpetersenii serovar Hardjo-bovis (strain JB197) protein is Peptide methionine sulfoxide reductase MsrA.